We begin with the raw amino-acid sequence, 454 residues long: tRNA modification GTPase MnmE (454 aa).

(6S)-5-formyl-5,6,7,8-tetrahydrofolate contacts are provided by Arg-23, Glu-80, and Lys-120. The region spanning Gly-216 to Gly-377 is the TrmE-type G domain. Asn-226 provides a ligand contact to K(+). GTP contacts are provided by residues Asn-226–Ser-231, Thr-245–Thr-251, Asp-270–Gly-273, Asn-335–Asp-338, and Ser-358–Arg-360. Ser-230 contributes to the Mg(2+) binding site. Residues Thr-245, Ile-247, and Thr-250 each coordinate K(+). Position 251 (Thr-251) interacts with Mg(2+). Lys-454 is a binding site for (6S)-5-formyl-5,6,7,8-tetrahydrofolate.

This sequence belongs to the TRAFAC class TrmE-Era-EngA-EngB-Septin-like GTPase superfamily. TrmE GTPase family. Homodimer. Heterotetramer of two MnmE and two MnmG subunits. K(+) serves as cofactor.

The protein resides in the cytoplasm. Its function is as follows. Exhibits a very high intrinsic GTPase hydrolysis rate. Involved in the addition of a carboxymethylaminomethyl (cmnm) group at the wobble position (U34) of certain tRNAs, forming tRNA-cmnm(5)s(2)U34. This Salmonella typhimurium (strain LT2 / SGSC1412 / ATCC 700720) protein is tRNA modification GTPase MnmE.